The following is a 479-amino-acid chain: MAIGGGGGGGSWSIHGRPDVTSRYEVLGRAGSGAYADVYRGRRRSDGAPVALKEVHDAVSARREADALLAAAPSRHVVALLDHFPGGDHDDDVLVLEWLPLDLSAVVRAAAAARPSALPAAQRKRWMLQVLEGVAACHSAGVVHRDLKPANLLISEDGVLKVADLGQARILQETGTYQGMHPYEQSSGVEPWVSQQRAVLHGVKENHPSHDSETQTGQEPERLTAADYLHEMDQLRAKSTHGDVDKMSLQDGNASCLATCSTADIDDDPFRASYSYDAEEGMLEEESGAFTSCVGTRWFRAPELLYGSTNYGQEVDLWSLGCILAELFNLEPIFPGTSDIDQIGRIISVLGNITEETFPGCSNLPDYNKIFFNKVEKPIGLEACLPDRSASEVSIIKRLLCYDPTKRASAADLLNDPYFAEEPLPVPIEGLQVPESKDEDDDSTEEWANFRGGDSDSDFDEFGSMDVTKTDKGFSIRFS.

One can recognise a Protein kinase domain in the interval 24–419 (YEVLGRAGSG…AADLLNDPYF (396 aa)). Residues 30 to 38 (AGSGAYADV) and lysine 53 each bind ATP. The Proton acceptor role is filled by aspartate 146. Position 291 is a phosphothreonine (threonine 291). Positions 429–479 (EGLQVPESKDEDDDSTEEWANFRGGDSDSDFDEFGSMDVTKTDKGFSIRFS) are disordered. Residues 468–479 (TKTDKGFSIRFS) are compositionally biased toward basic and acidic residues.

It belongs to the protein kinase superfamily. CMGC Ser/Thr protein kinase family. CDC2/CDKX subfamily.

It catalyses the reaction L-seryl-[protein] + ATP = O-phospho-L-seryl-[protein] + ADP + H(+). It carries out the reaction L-threonyl-[protein] + ATP = O-phospho-L-threonyl-[protein] + ADP + H(+). The enzyme catalyses [DNA-directed RNA polymerase] + ATP = phospho-[DNA-directed RNA polymerase] + ADP + H(+). The sequence is that of Cyclin-dependent kinase F-1 (CDKF-1) from Oryza sativa subsp. japonica (Rice).